Here is a 298-residue protein sequence, read N- to C-terminus: tRNA pseudouridine synthase B (298 aa).

Aspartate 46 acts as the Nucleophile in catalysis.

The protein belongs to the pseudouridine synthase TruB family. Type 1 subfamily.

The catalysed reaction is uridine(55) in tRNA = pseudouridine(55) in tRNA. Its function is as follows. Responsible for synthesis of pseudouridine from uracil-55 in the psi GC loop of transfer RNAs. The protein is tRNA pseudouridine synthase B of Paracoccus denitrificans (strain Pd 1222).